A 348-amino-acid chain; its full sequence is Oxygen-dependent coproporphyrinogen-III oxidase (348 aa).

Ser104 lines the substrate pocket. Residues His108 and His118 each coordinate a divalent metal cation. The active-site Proton donor is His118. 120–122 provides a ligand contact to substrate; sequence NYR. Positions 152 and 182 each coordinate a divalent metal cation. Positions 272 to 307 are important for dimerization; the sequence is YAEFNLVWDRGTIFGLQTNGRTESILMSLPPLARWE.

It belongs to the aerobic coproporphyrinogen-III oxidase family. Homodimer. It depends on a divalent metal cation as a cofactor.

It localises to the cytoplasm. It catalyses the reaction coproporphyrinogen III + O2 + 2 H(+) = protoporphyrinogen IX + 2 CO2 + 2 H2O. It participates in porphyrin-containing compound metabolism; protoporphyrin-IX biosynthesis; protoporphyrinogen-IX from coproporphyrinogen-III (O2 route): step 1/1. In terms of biological role, involved in the heme and chlorophyll biosynthesis. Catalyzes the aerobic oxidative decarboxylation of propionate groups of rings A and B of coproporphyrinogen-III to yield the vinyl groups in protoporphyrinogen-IX. The chain is Oxygen-dependent coproporphyrinogen-III oxidase from Prochlorococcus marinus (strain NATL2A).